The primary structure comprises 123 residues: Histone H1-like protein HC1 (123 aa).

The interval 54 to 123 (IKAEKSGLLK…KPSKARGFRK (70 aa)) is disordered. Residues 61–75 (LLKRKPSTKAPAKVK) are compositionally biased toward basic residues. The span at 85 to 102 (KSSAAAAKTSKAVKASKP) shows a compositional bias: low complexity. Residues 103–123 (ASKKTAAKKVKKPSKARGFRK) are compositionally biased toward basic residues.

Belongs to the histone H1/H5 family. HCT subfamily.

Functionally, might have a role analogous to that of eukaryotic histone proteins. This chain is Histone H1-like protein HC1 (hctA), found in Chlamydia pneumoniae (Chlamydophila pneumoniae).